The primary structure comprises 101 residues: Small ribosomal subunit protein uS14 (101 aa).

It belongs to the universal ribosomal protein uS14 family. In terms of assembly, part of the 30S ribosomal subunit. Contacts proteins S3 and S10.

Functionally, binds 16S rRNA, required for the assembly of 30S particles and may also be responsible for determining the conformation of the 16S rRNA at the A site. The sequence is that of Small ribosomal subunit protein uS14 from Chlamydia abortus (strain DSM 27085 / S26/3) (Chlamydophila abortus).